The chain runs to 484 residues: Probable cobyric acid synthase (484 aa).

The region spanning 247–433 (ELHIQIVKLP…LHGIFHNFAF (187 aa)) is the GATase cobBQ-type domain. The active-site Nucleophile is C325. H425 is an active-site residue.

Belongs to the CobB/CobQ family. CobQ subfamily.

It functions in the pathway cofactor biosynthesis; adenosylcobalamin biosynthesis. In terms of biological role, catalyzes amidations at positions B, D, E, and G on adenosylcobyrinic A,C-diamide. NH(2) groups are provided by glutamine, and one molecule of ATP is hydrogenolyzed for each amidation. This is Probable cobyric acid synthase from Thermococcus onnurineus (strain NA1).